A 160-amino-acid polypeptide reads, in one-letter code: Ribosomal RNA large subunit methyltransferase H (160 aa).

S-adenosyl-L-methionine is bound by residues leucine 77, glycine 109, and 128–133 (FSRLTF).

The protein belongs to the RNA methyltransferase RlmH family. In terms of assembly, homodimer.

It is found in the cytoplasm. It catalyses the reaction pseudouridine(1915) in 23S rRNA + S-adenosyl-L-methionine = N(3)-methylpseudouridine(1915) in 23S rRNA + S-adenosyl-L-homocysteine + H(+). Its function is as follows. Specifically methylates the pseudouridine at position 1915 (m3Psi1915) in 23S rRNA. This is Ribosomal RNA large subunit methyltransferase H from Desulfitobacterium hafniense (strain Y51).